The following is a 502-amino-acid chain: Galactose/methyl galactoside import ATP-binding protein MglA (502 aa).

2 consecutive ABC transporter domains span residues leucine 10 to glutamate 245 and asparagine 255 to leucine 502. ATP is bound at residue glycine 42 to serine 49.

It belongs to the ABC transporter superfamily. Galactose/methyl galactoside importer (TC 3.A.1.2.3) family. The complex is composed of one ATP-binding protein (MglA), two transmembrane proteins (MglC) and a solute-binding protein (MglB).

The protein localises to the cell inner membrane. The enzyme catalyses D-galactose(out) + ATP + H2O = D-galactose(in) + ADP + phosphate + H(+). It carries out the reaction methyl beta-D-galactoside(out) + ATP + H2O = methyl beta-D-galactoside(in) + ADP + phosphate + H(+). Functionally, part of the ABC transporter complex MglABC involved in galactose/methyl galactoside import. Responsible for energy coupling to the transport system. This chain is Galactose/methyl galactoside import ATP-binding protein MglA, found in Vibrio cholerae serotype O1 (strain ATCC 39315 / El Tor Inaba N16961).